The sequence spans 736 residues: Myotubularin-related protein 12 (736 aa).

Residues 182–558 (YLRSTNPEML…RQLSLPSSAF (377 aa)) enclose the Myotubularin phosphatase domain. Residues 672–691 (SLATQPDHPPPLHHRLPSFG) form a disordered region.

It belongs to the protein-tyrosine phosphatase family. Non-receptor class myotubularin subfamily. As to quaternary structure, heterodimer with lipid phosphatase mtm1. In skeletal muscles, the interaction stabilizes both mtmr12 and mtm1 protein levels.

The protein localises to the cytoplasm. It is found in the sarcoplasmic reticulum. The protein resides in the myofibril. Its subcellular location is the sarcomere. Acts as an adapter for the myotubularin phosphatase mtm1 to regulate mtm1 protein stability and possibly its intracellular location. By stabilizing mtm1 protein levels, required for skeletal muscle maintenance but not for myogenesis. In skeletal muscle cells, does not regulate mtm1 subcellular localization. The sequence is that of Myotubularin-related protein 12 (mtmr12) from Danio rerio (Zebrafish).